A 157-amino-acid chain; its full sequence is UPF0303 protein NT01EI_1570 (157 aa).

It belongs to the UPF0303 family.

The chain is UPF0303 protein NT01EI_1570 from Edwardsiella ictaluri (strain 93-146).